A 314-amino-acid chain; its full sequence is Taste receptor type 2 member 42 (314 aa).

At 1–7 (MATEMDK) the chain is on the extracellular side. A helical membrane pass occupies residues 8–28 (IFLTLATVEFIIGMLGNVFIG). Over 29–50 (LVNCSEGIKNQKVFSVDFILTC) the chain is Cytoplasmic. The chain crosses the membrane as a helical span at residues 51 to 71 (LAISTIGHLLVILFDSCVVGL). Over 72–101 (APHLYATDRVRRPVTMLWHMXNHLTTWLAT) the chain is Extracellular. Residues 102 to 122 (CLSIFYFFKIAHFPHSLFLWL) traverse the membrane as a helical segment. Residues 123–127 (RWRMN) are Cytoplasmic-facing. The helical transmembrane segment at 128 to 148 (RVIAILLTLSLFLLIFDCLVL) threads the bilayer. Over 149 to 187 (EMFIDXSLNIIDKSNLTLYLDESKTPYDKLSLLKILLSL) the chain is Extracellular. N163 carries an N-linked (GlcNAc...) asparagine glycan. The helical transmembrane segment at 188–208 (NSFIPFSLCLTSLLFLFLSLV) threads the bilayer. The Cytoplasmic portion of the chain corresponds to 209–238 (RHTRNLKLSSLGSRDSSTEAHRRAMKMVMS). Residues 239 to 259 (LLFLFIVHFFSLQVANWTFCI) traverse the membrane as a helical segment. Topologically, residues 260 to 265 (LGNNKY) are extracellular. The chain crosses the membrane as a helical span at residues 266-286 (TQFVTLALHAFPSCHSFILIL). Residues 287–314 (GNSKLRQTAVRLLWHLRNYTKRPNPLPL) lie on the Cytoplasmic side of the membrane.

Belongs to the G-protein coupled receptor T2R family.

It is found in the membrane. Receptor that may play a role in the perception of bitterness and is gustducin-linked. May play a role in sensing the chemical composition of the gastrointestinal content. The activity of this receptor may stimulate alpha gustducin, mediate PLC-beta-2 activation and lead to the gating of TRPM5. The protein is Taste receptor type 2 member 42 (TAS2R42) of Macaca mulatta (Rhesus macaque).